A 395-amino-acid chain; its full sequence is Torsin-3A (395 aa).

Residues 1 to 24 (MFFGAFWLLLLLLLPPLRPPGAQG) form the signal peptide. N-linked (GlcNAc...) asparagine glycosylation is present at asparagine 120. 165-172 (GWSGTGKN) lines the ATP pocket.

This sequence belongs to the ClpA/ClpB family. Torsin subfamily. May not form homohexamers. Post-translationally, N-glycosylated.

It is found in the cytoplasm. The protein resides in the endoplasmic reticulum lumen. In Rattus norvegicus (Rat), this protein is Torsin-3A (Tor3a).